Reading from the N-terminus, the 223-residue chain is Phosphoribosylformylglycinamidine synthase subunit PurQ (223 aa).

One can recognise a Glutamine amidotransferase type-1 domain in the interval 3 to 223; it reads SAVVQLPGLN…FASALDVVAA (221 aa). Cys-86 acts as the Nucleophile in catalysis. Catalysis depends on residues His-196 and Glu-198.

In terms of assembly, part of the FGAM synthase complex composed of 1 PurL, 1 PurQ and 2 PurS subunits.

It is found in the cytoplasm. The enzyme catalyses N(2)-formyl-N(1)-(5-phospho-beta-D-ribosyl)glycinamide + L-glutamine + ATP + H2O = 2-formamido-N(1)-(5-O-phospho-beta-D-ribosyl)acetamidine + L-glutamate + ADP + phosphate + H(+). It carries out the reaction L-glutamine + H2O = L-glutamate + NH4(+). It functions in the pathway purine metabolism; IMP biosynthesis via de novo pathway; 5-amino-1-(5-phospho-D-ribosyl)imidazole from N(2)-formyl-N(1)-(5-phospho-D-ribosyl)glycinamide: step 1/2. Its function is as follows. Part of the phosphoribosylformylglycinamidine synthase complex involved in the purines biosynthetic pathway. Catalyzes the ATP-dependent conversion of formylglycinamide ribonucleotide (FGAR) and glutamine to yield formylglycinamidine ribonucleotide (FGAM) and glutamate. The FGAM synthase complex is composed of three subunits. PurQ produces an ammonia molecule by converting glutamine to glutamate. PurL transfers the ammonia molecule to FGAR to form FGAM in an ATP-dependent manner. PurS interacts with PurQ and PurL and is thought to assist in the transfer of the ammonia molecule from PurQ to PurL. The sequence is that of Phosphoribosylformylglycinamidine synthase subunit PurQ from Rhizobium etli (strain ATCC 51251 / DSM 11541 / JCM 21823 / NBRC 15573 / CFN 42).